The sequence spans 152 residues: Endoribonuclease YbeY (152 aa).

The Zn(2+) site is built by His113, His117, and His123.

It belongs to the endoribonuclease YbeY family. It depends on Zn(2+) as a cofactor.

The protein localises to the cytoplasm. Functionally, single strand-specific metallo-endoribonuclease involved in late-stage 70S ribosome quality control and in maturation of the 3' terminus of the 16S rRNA. This is Endoribonuclease YbeY from Acidovorax ebreus (strain TPSY) (Diaphorobacter sp. (strain TPSY)).